Consider the following 110-residue polypeptide: Integration host factor subunit alpha (110 aa).

It belongs to the bacterial histone-like protein family. In terms of assembly, heterodimer of an alpha and a beta chain.

This protein is one of the two subunits of integration host factor, a specific DNA-binding protein that functions in genetic recombination as well as in transcriptional and translational control. This Delftia acidovorans (strain DSM 14801 / SPH-1) protein is Integration host factor subunit alpha.